The following is a 151-amino-acid chain: 6,7-dimethyl-8-ribityllumazine synthase (151 aa).

Residues F15, 49–51, and 73–75 contribute to the 5-amino-6-(D-ribitylamino)uracil site; these read AVE and AVI. 78–79 provides a ligand contact to (2S)-2-hydroxy-3-oxobutyl phosphate; the sequence is ET. H81 serves as the catalytic Proton donor. A 5-amino-6-(D-ribitylamino)uracil-binding site is contributed by F106. R120 provides a ligand contact to (2S)-2-hydroxy-3-oxobutyl phosphate.

The protein belongs to the DMRL synthase family. As to quaternary structure, forms an icosahedral capsid composed of 60 subunits, arranged as a dodecamer of pentamers.

The catalysed reaction is (2S)-2-hydroxy-3-oxobutyl phosphate + 5-amino-6-(D-ribitylamino)uracil = 6,7-dimethyl-8-(1-D-ribityl)lumazine + phosphate + 2 H2O + H(+). Its pathway is cofactor biosynthesis; riboflavin biosynthesis; riboflavin from 2-hydroxy-3-oxobutyl phosphate and 5-amino-6-(D-ribitylamino)uracil: step 1/2. Its function is as follows. Catalyzes the formation of 6,7-dimethyl-8-ribityllumazine by condensation of 5-amino-6-(D-ribitylamino)uracil with 3,4-dihydroxy-2-butanone 4-phosphate. This is the penultimate step in the biosynthesis of riboflavin. This Coxiella burnetii (strain CbuG_Q212) (Coxiella burnetii (strain Q212)) protein is 6,7-dimethyl-8-ribityllumazine synthase.